Reading from the N-terminus, the 196-residue chain is Calcineurin B homologous protein 2 (196 aa).

The N-myristoyl glycine moiety is linked to residue G2. EF-hand domains are found at residues 26-61 (ASLLRLYHRFQALDRDEKGFLSRLDLQQIGALAVNP), 71-106 (FPNGSQRLYFAGFARVLAYFRPIDEEDATLRDPKQP), 111-146 (SRMNKLRFAFQLYDLDRDGKISRNEMLQVLRLMVGV), and 152-187 (QLESITDRTVQEADEDGDGAVSFLEFTKSLEKMNIE). S27 bears the Phosphoserine mark. The Ca(2+) site is built by D124, D126, D128, K130, and E135. The Nuclear export signal signature appears at 137-148 (LQVLRLMVGVQV). Residues D165, D167, D169, and E176 each contribute to the Ca(2+) site.

It belongs to the calcineurin regulatory subunit family. CHP subfamily. As to quaternary structure, interacts with PPP3CA. Interacts with SLC9A1/NHE1; the interaction occurs in a calcium-dependent manner. Interacts with SLC9A1/NHE1.

Its subcellular location is the cytoplasm. The protein localises to the nucleus. The protein resides in the cell membrane. Functions as an integral cofactor in cell pH regulation by controlling plasma membrane-type Na(+)/H(+) exchange activity. Binds to and activates SLC9A1/NHE1 in a serum-independent manner, thus increasing pH and protecting cells from serum deprivation-induced death. Also plays a role in the regulation of cell proliferation and tumor growth by increasing the phosphatase activity of PPP3CA in a calcium-dependent manner. Activator of the calcineurin/NFAT signaling pathway. Involved in the cytoplasmic translocation of the transcription factor NFATC3 to the nucleus. In Mus musculus (Mouse), this protein is Calcineurin B homologous protein 2 (Chp2).